The sequence spans 93 residues: UPF0223 protein YfdD (93 aa).

This sequence belongs to the UPF0223 family.

This chain is UPF0223 protein YfdD (yfdD), found in Lactococcus lactis subsp. lactis (strain IL1403) (Streptococcus lactis).